Here is a 695-residue protein sequence, read N- to C-terminus: G-patch and R3H domain-containing protein C30B4.02c (695 aa).

6 disordered regions span residues 168–200, 213–242, 257–317, 332–351, 388–448, and 475–517; these read SDKEISSTEESEQLCYKEQESEKELYSKDNDDS, DIANNNAAPPPPLAQAQEQLSTENEDEFDI, FADL…FDEG, GNTDSLAEDEDDILEEDEDE, DSED…VAAR, and DKSK…DSDN. Basic and acidic residues predominate over residues 182–198; sequence CYKEQESEKELYSKDND. Acidic residues-rich tracts occupy residues 262–286, 307–317, and 337–351; these read VLEEDDDDEDEDEELEGEKEEEEEE, EDSESLEFDEG, and LAEDEDDILEEDEDE. Over residues 421 to 434 the composition is skewed to basic residues; the sequence is KKDRKLPKKMRKAQ. The R3H domain occupies 525-587; it reads KIFINDVYQR…KRYTMLSKTH (63 aa). Residues 652–695 form the G-patch domain; sequence KENPGRRLLEKLGWYAGKGLGHPENEGSKDSLRAIVKVSRSGLG.

The protein resides in the cytoplasm. This is G-patch and R3H domain-containing protein C30B4.02c from Schizosaccharomyces pombe (strain 972 / ATCC 24843) (Fission yeast).